Here is a 318-residue protein sequence, read N- to C-terminus: CMRF35-like molecule 8 (318 aa).

The signal sequence occupies residues 1 to 27; the sequence is MTQLASAVWLPTLLLLLLLFWLPGCVP. In terms of domain architecture, Ig-like V-type spans 28–129; it reads LHGPSTMSGS…FDGSLGFDKY (102 aa). Topologically, residues 28 to 185 are extracellular; the sequence is LHGPSTMSGS…HDYSQGLRLP (158 aa). A disulfide bridge connects residues C46 and C113. N93 is a glycosylation site (N-linked (GlcNAc...) asparagine). Positions 139 to 148 are enriched in low complexity; the sequence is SEDPVSSPGP. The disordered stretch occupies residues 139-174; it reads SEDPVSSPGPTLETPVVSTSLPTKGPALGSNTEGHR. A helical membrane pass occupies residues 186 to 206; that stretch reads ALLSVLALLLFLLVGTSLLAW. The Cytoplasmic segment spans residues 207–318; that stretch reads RMFQKRLVKA…PRKGLSDLYL (112 aa). Positions 284–296 are enriched in polar residues; the sequence is QDSHANGDSLHQP. The disordered stretch occupies residues 284–318; the sequence is QDSHANGDSLHQPQDQKAEYSEIQKPRKGLSDLYL. The segment covering 297 to 308 has biased composition (basic and acidic residues); sequence QDQKAEYSEIQK. Y303 carries the phosphotyrosine modification.

Belongs to the CD300 family. Upon tyrosine-phosphorylation, interacts with PTN6/SHP-1 and PTPN11/SHP-2 and INPP5D. In terms of processing, phosphorylated on tyrosine. Post-translationally, N-glycosylated. Present on the surface of the majority of myeloid cells and a subset of B-cells. Present on the surface of NK cells after IL-12 stimulation.

It localises to the cell membrane. Inhibitory receptor which may contribute to the down-regulation of cytolytic activity in natural killer (NK) cells, and to the down-regulation of mast cell degranulation. Negatively regulates the Toll-like receptor (TLR) signaling mediated by MYD88 but not TRIF through activation of PTPN6. The protein is CMRF35-like molecule 8 (Cd300a) of Mus musculus (Mouse).